Here is a 121-residue protein sequence, read N- to C-terminus: Large ribosomal subunit protein eL8 (121 aa).

It belongs to the eukaryotic ribosomal protein eL8 family. As to quaternary structure, part of the 50S ribosomal subunit. Probably part of the RNase P complex.

The protein resides in the cytoplasm. Multifunctional RNA-binding protein that recognizes the K-turn motif in ribosomal RNA, the RNA component of RNase P, box H/ACA, box C/D and box C'/D' sRNAs. The polypeptide is Large ribosomal subunit protein eL8 (Thermoplasma volcanium (strain ATCC 51530 / DSM 4299 / JCM 9571 / NBRC 15438 / GSS1)).